The primary structure comprises 373 residues: Histidinol-phosphate aminotransferase (373 aa).

N6-(pyridoxal phosphate)lysine is present on Lys233.

It belongs to the class-II pyridoxal-phosphate-dependent aminotransferase family. Histidinol-phosphate aminotransferase subfamily. In terms of assembly, homodimer. The cofactor is pyridoxal 5'-phosphate.

It catalyses the reaction L-histidinol phosphate + 2-oxoglutarate = 3-(imidazol-4-yl)-2-oxopropyl phosphate + L-glutamate. Its pathway is amino-acid biosynthesis; L-histidine biosynthesis; L-histidine from 5-phospho-alpha-D-ribose 1-diphosphate: step 7/9. This chain is Histidinol-phosphate aminotransferase, found in Nitratidesulfovibrio vulgaris (strain ATCC 29579 / DSM 644 / CCUG 34227 / NCIMB 8303 / VKM B-1760 / Hildenborough) (Desulfovibrio vulgaris).